The sequence spans 382 residues: Alanine racemase 1 (382 aa).

Lysine 39 acts as the Proton acceptor; specific for D-alanine in catalysis. At lysine 39 the chain carries N6-(pyridoxal phosphate)lysine. A substrate-binding site is contributed by arginine 138. The Proton acceptor; specific for L-alanine role is filled by tyrosine 265. Methionine 312 contacts substrate.

The protein belongs to the alanine racemase family. The cofactor is pyridoxal 5'-phosphate.

It carries out the reaction L-alanine = D-alanine. Its pathway is amino-acid biosynthesis; D-alanine biosynthesis; D-alanine from L-alanine: step 1/1. Catalyzes the interconversion of L-alanine and D-alanine. May also act on other amino acids. The sequence is that of Alanine racemase 1 (alr1) from Staphylococcus aureus (strain MRSA252).